The chain runs to 98 residues: uncharacterized protein (98 aa).

This is an uncharacterized protein from Invertebrate iridescent virus 6 (IIV-6).